Reading from the N-terminus, the 515-residue chain is Endoglucanase 23 (515 aa).

A signal peptide spans 1-29; the sequence is MALLSAPVRRRRSRVRVLLVCCCLLLALA. Residue Asp95 is the Nucleophile of the active site. 3 N-linked (GlcNAc...) asparagine glycosylation sites follow: Asn178, Asn375, and Asn384. His426 is a catalytic residue. Asn452 is a glycosylation site (N-linked (GlcNAc...) asparagine). Active-site residues include Asp477 and Glu486.

It belongs to the glycosyl hydrolase 9 (cellulase E) family.

Its subcellular location is the secreted. The enzyme catalyses Endohydrolysis of (1-&gt;4)-beta-D-glucosidic linkages in cellulose, lichenin and cereal beta-D-glucans.. The protein is Endoglucanase 23 (GLU12) of Oryza sativa subsp. japonica (Rice).